A 153-amino-acid polypeptide reads, in one-letter code: Protein ElaA (153 aa).

In terms of domain architecture, N-acetyltransferase spans 7–151 (LHHSELSVSQ…PHIGMAREVI (145 aa)).

The protein belongs to the UPF0039 (ElaA) family.

This is Protein ElaA (elaA) from Escherichia coli (strain K12).